The chain runs to 462 residues: MTVSDSSPNSPWHSFPRKVWRTGLKWIADLRVAIALLLLISVFSILGTVIEQGSTIQFYQENYPEDPALLGFLSWKVLLGLGLDHVYTTWWYLVLLLAFGVSLIACTFRRQLPALKTARNWNYYSQARQFNKLALSTELDHGSLQSLKPQLEKKRYKIFQDGEKLYARKGIVGRIGPIIVHIGMIVTLVGSIWGAFGGFMAQEMIPSGVNFKVNNVFKAGIFSESDRPWSVNVNRFWIDYTPTGDIDQFYSDLSVVDGEGQELERKTISVNHPLRYDGITFYQTSWSIGGVQVQLNNSPIFQLPAAQIPTENGAKLWGSWVPIKPDMSAGVSILMQDLQGSAIVYNEQGELVGAVRVGDRLDVGDISLKLVDLVGSTGLQIKADPGVPVVYTGFLLVMLGVVMSYVSYSQVWALAAGDRFYLGGKTNRAQVAFERELLEIINTLETSHSQATPENTLTSIEQ.

The next 3 helical transmembrane spans lie at 30–50, 89–109, and 175–195; these read LRVA…GTVI, TWWY…CTFR, and IGPI…IWGA.

It belongs to the Ccs1/CcsB family. In terms of assembly, may interact with CcsA.

The protein resides in the cellular thylakoid membrane. Functionally, required during biogenesis of c-type cytochromes (cytochrome c6 and cytochrome f) at the step of heme attachment. This is Cytochrome c biogenesis protein CcsB from Picosynechococcus sp. (strain ATCC 27264 / PCC 7002 / PR-6) (Agmenellum quadruplicatum).